The sequence spans 316 residues: KRR1 small subunit processome component (316 aa).

One can recognise a KH domain in the interval 122–192 (ACDVIKIGNF…VRRVVEDCMK (71 aa)). The span at 279–304 (KKLNEQKEKQMEREIERQEERAKDFI) shows a compositional bias: basic and acidic residues. Residues 279–316 (KKLNEQKEKQMEREIERQEERAKDFIAPEEEAYKPNQN) are disordered.

The protein belongs to the KRR1 family. In terms of assembly, component of the ribosomal small subunit (SSU) processome composed of at least 40 protein subunits and snoRNA U3. Interacts with snoRNA U3. Interacts with MPP10, KRI1 and with ribosomal proteins RPS1A, RPS4A, RPS4B, RPS8A, RPS8B, RPS11A, RPS11B, RPS13, RPS24, RPS25, RPL4A, RPL7B, RPL8, RPL23, RPL25 and RPL28.

It is found in the nucleus. Its subcellular location is the nucleolus. Functionally, required for 40S ribosome biogenesis. Involved in nucleolar processing of pre-18S ribosomal RNA and ribosome assembly. Essential for vegetative growth. The sequence is that of KRR1 small subunit processome component from Saccharomyces cerevisiae (strain RM11-1a) (Baker's yeast).